The primary structure comprises 185 residues: ATP-dependent protease subunit HslV (185 aa).

Thr-12 is a catalytic residue. Na(+)-binding residues include Ala-168, Cys-171, and Thr-174.

Belongs to the peptidase T1B family. HslV subfamily. In terms of assembly, a double ring-shaped homohexamer of HslV is capped on each side by a ring-shaped HslU homohexamer. The assembly of the HslU/HslV complex is dependent on binding of ATP.

The protein resides in the cytoplasm. It carries out the reaction ATP-dependent cleavage of peptide bonds with broad specificity.. Allosterically activated by HslU binding. Protease subunit of a proteasome-like degradation complex believed to be a general protein degrading machinery. The chain is ATP-dependent protease subunit HslV from Cereibacter sphaeroides (strain KD131 / KCTC 12085) (Rhodobacter sphaeroides).